The sequence spans 241 residues: Demethylmenaquinone methyltransferase (241 aa).

Residues threonine 60, aspartate 81, and 106 to 107 (DA) each bind S-adenosyl-L-methionine.

It belongs to the class I-like SAM-binding methyltransferase superfamily. MenG/UbiE family.

The catalysed reaction is a 2-demethylmenaquinol + S-adenosyl-L-methionine = a menaquinol + S-adenosyl-L-homocysteine + H(+). The protein operates within quinol/quinone metabolism; menaquinone biosynthesis; menaquinol from 1,4-dihydroxy-2-naphthoate: step 2/2. In terms of biological role, methyltransferase required for the conversion of demethylmenaquinol (DMKH2) to menaquinol (MKH2). The sequence is that of Demethylmenaquinone methyltransferase from Staphylococcus carnosus (strain TM300).